A 272-amino-acid polypeptide reads, in one-letter code: MTHPLQATIEELWERRTELSPQSPPTTIAAINSVIGDLDSGKLRVAEKIAGEWFTHQWIKKAVLLSFRVRDNRVQEAGDIRFYDKVDTKFEGWTEEQFRQGGFRVVPGTIVRKGSYVAKNAVLMPSFVNIGAYVDESTMVDTWVTVGSCAQIGKNVHLSGGVGIGGVLEPLQANPTIIEDNCFIGARSEVVEGVVIGENSVLSMGVYIGQSTPIYDRETGEVTYGRVPPGSVVISGTLPKADGKYSLYAAIIVKKVDAQTRSKTSINELLRP.

Residues Arg-104 and Asp-141 each contribute to the substrate site.

Belongs to the transferase hexapeptide repeat family. Homotrimer.

The protein resides in the cytoplasm. It catalyses the reaction (S)-2,3,4,5-tetrahydrodipicolinate + succinyl-CoA + H2O = (S)-2-succinylamino-6-oxoheptanedioate + CoA. Its pathway is amino-acid biosynthesis; L-lysine biosynthesis via DAP pathway; LL-2,6-diaminopimelate from (S)-tetrahydrodipicolinate (succinylase route): step 1/3. The protein is 2,3,4,5-tetrahydropyridine-2,6-dicarboxylate N-succinyltransferase of Dechloromonas aromatica (strain RCB).